Reading from the N-terminus, the 795-residue chain is MKDFLRLELPVLPLRNTVVLPHTTTGVDVGRLKSKRAVEEALSADRLLFLVTQKDPEVDDPAPEDLYAVGTLAVVKQAMRLPDGTLQVMVEARSRARLLSYVAAPYLRAVGEAIPEPPLKDPELARVLVNEVQEAFERYLQNHKTLRLDRYQQEAVKSTRDPAILADLVAHHATWTLEEKQTILETPEVEERLKRVLALLLRDLERFELDKKIAARVKEQMDQNQREYYLREQMKAIQKELGGGEDFLTEIEELRERIEKKGMPEPVKEKALKELKRLERMQPGSPEATVSRTYLDWLLEVPWTEADPEVLDISVTKRVLDEDHYGLKEVKERILEYLAVRQLTQGKEVKGHAPILCFVGPPGVGKTSLGKSIARSMNRRFHRISLGGVRDEAEIRGHRRTYIGALPGKIIQGMKQVGVVNPVFLLDEIDKLSSDWRGDPAAALLEVLDPEQNHTFTDHYLDVPYDLSKVFFITTANTLSTIPRPLLDRMEVIEIPGYTLHEKRAIARYFRWPFQVKEAGLEGRLEITDRAIERIVQEYTREAGVRNLDRELSKVARKAAKDYLEKPWEGVRVVDAEDLEAYLGVPKYRPDRAEKEPQVGAAQGLAWTPYGGTLLTIEAVAVPGTGKVNLTGNLGEVMKESAHAALTYLRAHREEWGLPEGFHKDYDLHIHVPEGATPKDGPSAGITIATALASALTGRPVRMDIAMTGEITLRGRVLPIGGVKEKLLAAHQAGIHRVILPKENAAELKEVPEEILKDLEIHFVEEVGEVLKLLLLPPPPPPAVQPDRPQPGVGA.

Residues 9 to 204 (LPVLPLRNTV…RVLALLLRDL (196 aa)) form the Lon N-terminal domain. ATP is bound at residue 360–367 (GPPGVGKT). A Lon proteolytic domain is found at 596-777 (EPQVGAAQGL…GEVLKLLLLP (182 aa)). Active-site residues include S683 and K726.

The protein belongs to the peptidase S16 family. As to quaternary structure, homohexamer. Organized in a ring with a central cavity.

It localises to the cytoplasm. The catalysed reaction is Hydrolysis of proteins in presence of ATP.. ATP-dependent serine protease that mediates the selective degradation of mutant and abnormal proteins as well as certain short-lived regulatory proteins. Required for cellular homeostasis and for survival from DNA damage and developmental changes induced by stress. Degrades polypeptides processively to yield small peptide fragments that are 5 to 10 amino acids long. Binds to DNA in a double-stranded, site-specific manner. The chain is Lon protease 1 from Thermus thermophilus (strain ATCC BAA-163 / DSM 7039 / HB27).